Reading from the N-terminus, the 151-residue chain is MADTDDKKAFDLAIRLLGEREHSRKEIITKLERRKFSEAAIDKTLERLDQLGLIDDRSFAEHFVGSRSRKKPSGKYKLRYELFQKGISETIIDEILSDYDSSAHCLDAAMKKFPFLKGDDHYKRKKLYAFLANRGFDSHSIRETLDQIFRS.

This sequence belongs to the RecX family.

It localises to the cytoplasm. Modulates RecA activity. The sequence is that of Regulatory protein RecX from Chlorobium phaeobacteroides (strain BS1).